The primary structure comprises 575 residues: Proline--tRNA ligase (575 aa).

The protein belongs to the class-II aminoacyl-tRNA synthetase family. ProS type 1 subfamily. As to quaternary structure, homodimer.

Its subcellular location is the cytoplasm. The catalysed reaction is tRNA(Pro) + L-proline + ATP = L-prolyl-tRNA(Pro) + AMP + diphosphate. Functionally, catalyzes the attachment of proline to tRNA(Pro) in a two-step reaction: proline is first activated by ATP to form Pro-AMP and then transferred to the acceptor end of tRNA(Pro). As ProRS can inadvertently accommodate and process non-cognate amino acids such as alanine and cysteine, to avoid such errors it has two additional distinct editing activities against alanine. One activity is designated as 'pretransfer' editing and involves the tRNA(Pro)-independent hydrolysis of activated Ala-AMP. The other activity is designated 'posttransfer' editing and involves deacylation of mischarged Ala-tRNA(Pro). The misacylated Cys-tRNA(Pro) is not edited by ProRS. This Saccharophagus degradans (strain 2-40 / ATCC 43961 / DSM 17024) protein is Proline--tRNA ligase.